The sequence spans 1122 residues: Histone deacetylase 5 (1122 aa).

The disordered stretch occupies residues 1-24 (MNSPNESDGMSGREPSLEILPRTS). Lys-35 is covalently cross-linked (Glycyl lysine isopeptide (Lys-Gly) (interchain with G-Cter in SUMO2)). 2 disordered regions span residues 41-60 (AMPSSMGGGGGGSPSPVELR) and 196-281 (KEPT…SSPL). Residues 247 to 258 (DSRDDFPLRKTA) are compositionally biased toward basic and acidic residues. The residue at position 259 (Ser-259) is a Phosphoserine; by AMPK, CaMK1, SIK1 and PKD/PRKD1. Residues 272–281 (KVAERRSSPL) show a composition bias toward basic and acidic residues. Position 292 is a phosphothreonine; by PKC (Thr-292). Disordered regions lie at residues 302 to 343 (GAGP…NIPT) and 481 to 504 (MRTVGKLPRHRPLSRTQSSPLPQS). Residues 312-327 (NSAPGSGPSSPNSSHS) show a composition bias toward low complexity. Residues 328-340 (TIAENGFTGSVPN) show a composition bias toward polar residues. The segment covering 494-504 (SRTQSSPLPQS) has biased composition (low complexity). Phosphoserine; by AMPK, CaMK1, SIK1 and PKD/PRKD1 is present on Ser-498. N6-acetyllysine is present on Lys-533. A disordered region spans residues 536-625 (TKTGELPRQP…GPDLEEPGAG (90 aa)). The span at 581–621 (STQEDLEEEDEEDDGEEEEDCIQVKDEEGESGAEEGPDLEE) shows a compositional bias: acidic residues. Residues Ser-611 and Ser-661 each carry the phosphoserine modification. Residues 684–1028 (GVVYDTFMLK…VSALLSVELQ (345 aa)) form a histone deacetylase region. Cys-696, Cys-698, His-704, and Cys-781 together coordinate Zn(2+). The active site involves His-833. Positions 1081 to 1122 (EEAETVSAMALLSVGAEQAQAAAAREHSPRPAEEPMEQEPAL) match the Nuclear export signal motif. The segment at 1097-1122 (EQAQAAAAREHSPRPAEEPMEQEPAL) is disordered. Positions 1104–1113 (AREHSPRPAE) are enriched in basic and acidic residues. Ser-1108 carries the phosphoserine modification.

It belongs to the histone deacetylase family. HD type 2 subfamily. As to quaternary structure, interacts with AHRR, BAHD1, BCOR, HDAC7, HDAC9, CTBP1, MEF2C, NCOR2, NRIP1, PHB2 and a 14-3-3 chaperone protein. Interacts with BCL6, DDIT3/CHOP, GRK5, KDM5B and MYOCD. Interacts with EP300 in the presence of TFAP2C. Interacts with ANKRA2. Interacts with CUL7 (as part of the 3M complex); negatively regulated by ANKRA2. Interacts with ZBTB7B; the interaction allows the recruitment of HDAC4 on CD8 loci for deacetylation and possible inhibition of CD8 genes expression. Interacts with RARA. Post-translationally, phosphorylated by AMPK, CaMK1, SIK1 and PRKD1 at Ser-259 and Ser-498. The phosphorylation is required for the export to the cytoplasm and inhibition. Phosphorylated by the PKC kinases PKN1 and PKN2, impairing nuclear import. Phosphorylated by GRK5, leading to nuclear export of HDAC5 and allowing MEF2-mediated transcription. In terms of processing, ubiquitinated. Polyubiquitination however does not lead to its degradation. In terms of tissue distribution, ubiquitous.

It is found in the nucleus. The protein resides in the cytoplasm. It carries out the reaction N(6)-acetyl-L-lysyl-[histone] + H2O = L-lysyl-[histone] + acetate. Functionally, responsible for the deacetylation of lysine residues on the N-terminal part of the core histones (H2A, H2B, H3 and H4). Histone deacetylation gives a tag for epigenetic repression and plays an important role in transcriptional regulation, cell cycle progression and developmental events. Histone deacetylases act via the formation of large multiprotein complexes. Involved in muscle maturation by repressing transcription of myocyte enhancer MEF2C. During muscle differentiation, it shuttles into the cytoplasm, allowing the expression of myocyte enhancer factors. Involved in the MTA1-mediated epigenetic regulation of ESR1 expression in breast cancer. Serves as a corepressor of RARA and causes its deacetylation. In association with RARA, plays a role in the repression of microRNA-10a and thereby in the inflammatory response. The sequence is that of Histone deacetylase 5 (HDAC5) from Homo sapiens (Human).